A 251-amino-acid chain; its full sequence is MTETILSGGQIEVGEHHTTTWFGMTVNTDTVLSTAIAAAIVIALAFFLRTKVNSTGVPCGMQLFWEAITVQMRTQIESAIGMRIAPFVLPLAVTIFVFILISNWLSVLPLQYTNADGHTTEVLSSAAADINYVLALAFFVFVCYHLAGIWRRGIVGHPVAVLKGHVAFLAPINLVEEITKPISLSLRLFGNIFAGGILVTLIALFPPYIMWAPNAIWKSFDLFVGAIQAFIFSILTILYFSQAMEVEDHHD.

The next 5 helical transmembrane spans lie at 28–48, 84–104, 130–150, 192–212, and 220–240; these read TDTVLSTAIAAAIVIALAFFL, IAPFVLPLAVTIFVFILISNW, INYVLALAFFVFVCYHLAGIW, IFAGGILVTLIALFPPYIMWA, and FDLFVGAIQAFIFSILTILYF.

Belongs to the ATPase A chain family. In terms of assembly, F-type ATPases have 2 components, CF(1) - the catalytic core - and CF(0) - the membrane proton channel. CF(1) has five subunits: alpha(3), beta(3), gamma(1), delta(1), epsilon(1). CF(0) has three main subunits: a(1), b(2) and c(9-12). The alpha and beta chains form an alternating ring which encloses part of the gamma chain. CF(1) is attached to CF(0) by a central stalk formed by the gamma and epsilon chains, while a peripheral stalk is formed by the delta and b chains.

It localises to the cell membrane. In terms of biological role, key component of the proton channel; it plays a direct role in the translocation of protons across the membrane. This chain is ATP synthase subunit a, found in Mycobacterium leprae (strain TN).